The chain runs to 151 residues: Ribosome maturation factor RimP (151 aa).

The protein belongs to the RimP family.

Its subcellular location is the cytoplasm. Its function is as follows. Required for maturation of 30S ribosomal subunits. This Synechocystis sp. (strain ATCC 27184 / PCC 6803 / Kazusa) protein is Ribosome maturation factor RimP.